The following is a 782-amino-acid chain: Potassium transporter 6 (782 aa).

The Cytoplasmic segment spans residues 1–18; it reads MEIESGSYQNAKKESWRT. The helical transmembrane segment at 19-39 threads the bilayer; that stretch reads VLTLAYQSLGVVYGDLSISPL. Residues 40 to 61 lie on the Extracellular side of the membrane; sequence YVYKSTFAEDIHHSESNEEIFG. The helical transmembrane segment at 62–82 threads the bilayer; sequence VLSFIFWTITLVPLLKYVFIV. Topologically, residues 83–153 are cytoplasmic; sequence LRADDNGEGG…TLEKHGVLQK (71 aa). The chain crosses the membrane as a helical span at residues 154–174; it reads ILLVLALIGTCMVIGDGVLTP. Topologically, residues 175-195 are extracellular; sequence AISVFSAVSGVELSMSKEHHK. The chain crosses the membrane as a helical span at residues 196–216; that stretch reads YIELPAACVILIGLFALQHYG. The Cytoplasmic portion of the chain corresponds to 217 to 219; that stretch reads THR. A helical transmembrane segment spans residues 220 to 240; that stretch reads VGFLFAPVILLWLMCISAIGV. At 241-270 the chain is on the extracellular side; it reads YNIFHWNPHVYQALSPYYMYKFLKKTQSRG. A helical membrane pass occupies residues 271-291; it reads WMSLGGILLCITGSEAMFADL. Topologically, residues 292–296 are cytoplasmic; it reads GHFSQ. A helical membrane pass occupies residues 297–317; it reads LSIKIAFTSLVYPSLILAYMG. Residues 318-347 lie on the Extracellular side of the membrane; sequence QAAYLSQHHIIESEYNIGFYVSVPERLRWP. The chain crosses the membrane as a helical span at residues 348 to 368; the sequence is VLVIAILAAVVGSQAIITGTF. Residues 369–395 lie on the Cytoplasmic side of the membrane; it reads SIIKQCSALGCFPKVKIVHTSSKIHGQ. The chain crosses the membrane as a helical span at residues 396–416; it reads IYIPEINWILMVLCLAVTIGF. The Extracellular segment spans residues 417–421; the sequence is RDTKR. 2 helical membrane passes run 422 to 442 and 443 to 463; these read LGNA…CLMS and LVIV…VVFF. At 464–474 the chain is on the extracellular side; it reads GTIESLYFSAS. A helical membrane pass occupies residues 475–495; the sequence is LIKFLEGAWVPIALAFCFLLA. At 496-782 the chain is on the cytoplasmic side; the sequence is MCTWHYGTLK…TLEVGMIYNV (287 aa). Residues 664–675 show a composition bias toward basic and acidic residues; sequence YESDIDDPDKPG. Positions 664–693 are disordered; that stretch reads YESDIDDPDKPGTSEIRSPKPKKKSKSKVK. Basic residues predominate over residues 682–693; it reads PKPKKKSKSKVK.

Belongs to the HAK/KUP transporter (TC 2.A.72.3) family.

The protein resides in the cell membrane. Probable potassium transporter. The sequence is that of Potassium transporter 6 (POT6) from Arabidopsis thaliana (Mouse-ear cress).